The chain runs to 147 residues: Cyanate hydratase (147 aa).

Catalysis depends on residues Arg-88, Glu-91, and Ser-114.

It belongs to the cyanase family.

The catalysed reaction is cyanate + hydrogencarbonate + 3 H(+) = NH4(+) + 2 CO2. Catalyzes the reaction of cyanate with bicarbonate to produce ammonia and carbon dioxide. This Acaryochloris marina (strain MBIC 11017) protein is Cyanate hydratase.